The following is a 533-amino-acid chain: GMP synthase [glutamine-hydrolyzing] (533 aa).

The Glutamine amidotransferase type-1 domain occupies 25-215; it reads SIVIFDFGSQ…VFNICKCHAN (191 aa). The active-site Nucleophile is Cys102. Active-site residues include His189 and Glu191. The 193-residue stretch at 216-408 folds into the GMPS ATP-PPase domain; it reads WTMGNYIQES…LGLPDEMIWR (193 aa). 243–249 contributes to the ATP binding site; it reads SGGVDSA.

In terms of assembly, homodimer.

It carries out the reaction XMP + L-glutamine + ATP + H2O = GMP + L-glutamate + AMP + diphosphate + 2 H(+). Its pathway is purine metabolism; GMP biosynthesis; GMP from XMP (L-Gln route): step 1/1. Functionally, catalyzes the synthesis of GMP from XMP. In Dehalococcoides mccartyi (strain CBDB1), this protein is GMP synthase [glutamine-hydrolyzing].